Here is a 391-residue protein sequence, read N- to C-terminus: Multidrug resistance protein MdtL (391 aa).

Helical transmembrane passes span 4–24 (FLICSFALVLLYPAGIDMYLV), 42–62 (IAFSVYLAGMAAAMLFAGKVA), 69–89 (PVAIPGAALFIIASVFCSLAE), 93–113 (LFLAGRFLQGLGAGCCYVVAF), 131–151 (LLNGITCIIPVLAPVLGHLIM), 158–178 (SLFWAMATMGIAVLMLSLFIL), 203–222 (FFLSRVVITTLSVSVILTFV), 245–265 (ALTAGVSMTVSFSTPFALGIF), 269–289 (TLMITSQVLFLAAGITLAVSP), 293–313 (ISLFGITLICAGFSIGFGVAM), 324–346 (AGVASSTLGIAQVCGSSLWIWLA), and 363–383 (ACSIVSLLLIMFVTPGRPVAA).

Belongs to the major facilitator superfamily. DHA1 family. MdtL (TC 2.A.1.2.22) subfamily.

The protein resides in the cell inner membrane. Its function is as follows. Confers resistance to chloramphenicol. The polypeptide is Multidrug resistance protein MdtL (Escherichia fergusonii (strain ATCC 35469 / DSM 13698 / CCUG 18766 / IAM 14443 / JCM 21226 / LMG 7866 / NBRC 102419 / NCTC 12128 / CDC 0568-73)).